The primary structure comprises 369 residues: MAKRIKNTTPKQDGFRMPGEFEKQKQIWMLWPWRNDNWRLGAKPAQKAFLEVAEAISEFEPVSLCVPPLQYENALARVSELGSHNIRIIEMTNDDAWIRDCGPTFLVNDKGDLRAVDWEFNAWGGLVDGLYFPWDQDALVARKVCEIEGVDSYKTKDFVLEGGSIHVDGEGTVLVTEMCLLHPSRNPHLTKEDIEDKLKDYLNCVKVLWVKDGIDPYETNGHIDDVACFIRPGEVACIYTDDKEHPFYQEAKAAYDFLSQQTDAKGRPLKVHKMCVTKEPCYLQEAATIDYVEGSIPREEGEMAIASYLNFLIVNGGIILPQYGDENDQLAKQQVQEMFPDRKVVGVRTEEIAYGGGNIHCITQQQPAT.

Cysteine 361 acts as the Amidino-cysteine intermediate in catalysis.

This sequence belongs to the agmatine deiminase family.

It catalyses the reaction agmatine + H2O = N-carbamoylputrescine + NH4(+). This is Putative agmatine deiminase from Streptococcus mutans serotype c (strain ATCC 700610 / UA159).